The sequence spans 428 residues: MRVQRPKGTVDILPETSGQWEKVEQTARDLFKRANYHEIRTPSFENYELFSRSSGETSDVVEKEMYDFEDKGGRHIALRPEGTAGVVRAYVENKIYGPDYVKPFNVYYIAAMYRYERPQAGRQREFHQIGVESFGSNGYLADVETILLGHDLLAELGVKNYELHINTLGDSEVRQAYHDALVDYFTPVKDQLSEDSQRRLGKNPLRILDSKAEEDQQFLSEAPKIRDYLDEESKENFNKILASLDKLGVKYVIDDDLVRGLDYYTGVIFEFMVDDPTLWASPSTVLGGGRYNHLVEEFSGPETPAVGFGIGEERLMLVLSKQNPEMFEDQGIDFFITNIGEGTDIKAVEVARQLRSLGFSAQYDVDQKKLKAQFRKADRVGARYVVTLGAKELAEGKLTVKRLSDGQQFSLEFTDLEDKTNLLSKIEK.

Belongs to the class-II aminoacyl-tRNA synthetase family. As to quaternary structure, homodimer.

The protein resides in the cytoplasm. It carries out the reaction tRNA(His) + L-histidine + ATP = L-histidyl-tRNA(His) + AMP + diphosphate + H(+). This Lactobacillus delbrueckii subsp. bulgaricus (strain ATCC 11842 / DSM 20081 / BCRC 10696 / JCM 1002 / NBRC 13953 / NCIMB 11778 / NCTC 12712 / WDCM 00102 / Lb 14) protein is Histidine--tRNA ligase.